The sequence spans 88 residues: Small ribosomal subunit protein uS15 (88 aa).

It belongs to the universal ribosomal protein uS15 family. Part of the 30S ribosomal subunit. Forms a bridge to the 50S subunit in the 70S ribosome, contacting the 23S rRNA.

Its function is as follows. One of the primary rRNA binding proteins, it binds directly to 16S rRNA where it helps nucleate assembly of the platform of the 30S subunit by binding and bridging several RNA helices of the 16S rRNA. In terms of biological role, forms an intersubunit bridge (bridge B4) with the 23S rRNA of the 50S subunit in the ribosome. The polypeptide is Small ribosomal subunit protein uS15 (Paracidovorax citrulli (strain AAC00-1) (Acidovorax citrulli)).